The sequence spans 496 residues: L-arabinose isomerase (496 aa).

Mn(2+) contacts are provided by E306, E331, H348, and H447.

The protein belongs to the arabinose isomerase family. Mn(2+) serves as cofactor.

The enzyme catalyses beta-L-arabinopyranose = L-ribulose. It participates in carbohydrate degradation; L-arabinose degradation via L-ribulose; D-xylulose 5-phosphate from L-arabinose (bacterial route): step 1/3. In terms of biological role, catalyzes the conversion of L-arabinose to L-ribulose. This chain is L-arabinose isomerase, found in Geobacillus thermodenitrificans (strain NG80-2).